A 482-amino-acid chain; its full sequence is Programmed cell death protein 7 (482 aa).

Disordered regions lie at residues 1-136 (MALP…GDAA) and 151-170 (GNPR…GPSL). Residues 13–48 (GPPPPQPPPSAPFGCPPPPLPSPAFPPPLPQRPGPF) are compositionally biased toward pro residues. A compositionally biased stretch (low complexity) spans 49-71 (PGASAPFLQPPLALQPRAPAEAS). Pro residues-rich tracts occupy residues 82–100 (PVPP…PFPG) and 109–130 (PPPP…PPPD). The span at 151 to 168 (GNPRRPGGLRTPRTPAGP) shows a compositional bias: low complexity. Residues 233–408 (EARRRLERVR…LQKREIESKL (176 aa)) are a coiled coil.

As to quaternary structure, interacts with RBM40. Component of the U11/U12 snRNPs that are part of the U12-type spliceosome. As to expression, highly expressed in testis, thymus and lymph nodes. Detected at low levels in embryonic stem cells.

The protein resides in the nucleus. Its function is as follows. Promotes apoptosis when overexpressed. The protein is Programmed cell death protein 7 (Pdcd7) of Mus musculus (Mouse).